The chain runs to 263 residues: ATP synthase subunit b 2 (263 aa).

The helical transmembrane segment at 2–22 threads the bilayer; sequence LIDPLTVVAQIINFLILVALL.

This sequence belongs to the ATPase B chain family. In terms of assembly, F-type ATPases have 2 components, F(1) - the catalytic core - and F(0) - the membrane proton channel. F(1) has five subunits: alpha(3), beta(3), gamma(1), delta(1), epsilon(1). F(0) has four main subunits: a(1), b(1), b'(1) and c(10-14). The alpha and beta chains form an alternating ring which encloses part of the gamma chain. F(1) is attached to F(0) by a central stalk formed by the gamma and epsilon chains, while a peripheral stalk is formed by the delta, b and b' chains.

It localises to the cellular thylakoid membrane. Its function is as follows. F(1)F(0) ATP synthase produces ATP from ADP in the presence of a proton or sodium gradient. F-type ATPases consist of two structural domains, F(1) containing the extramembraneous catalytic core and F(0) containing the membrane proton channel, linked together by a central stalk and a peripheral stalk. During catalysis, ATP synthesis in the catalytic domain of F(1) is coupled via a rotary mechanism of the central stalk subunits to proton translocation. Functionally, component of the F(0) channel, it forms part of the peripheral stalk, linking F(1) to F(0). The polypeptide is ATP synthase subunit b 2 (Acaryochloris marina (strain MBIC 11017)).